Reading from the N-terminus, the 339-residue chain is Chromo domain-containing protein cec-3 (339 aa).

Positions 1–21 (MSNEGSREESREPEAREGKSD) are disordered. The Chromo domain occupies 24-84 (FEVEKILAHK…KLKVTDKTEL (61 aa)). The segment covering 91–105 (QIKKNKSQKSKKRSK) has biased composition (basic residues). 2 disordered regions span residues 91–199 (QIKK…APLS) and 215–272 (EEKA…QRTL). Composition is skewed to basic and acidic residues over residues 106–117 (TVSDHESNHDSD) and 171–183 (AAMEVRDTRRNWL). Positions 184-193 (DEESSDDEAE) are enriched in acidic residues. A compositionally biased stretch (basic and acidic residues) spans 230-241 (KPREVVIKKDPS). The span at 242 to 251 (ESPVASASSV) shows a compositional bias: low complexity.

In terms of tissue distribution, expressed in every cell of the embryo (at protein level). In adults, expressed predominantly in the head region and the germline.

Its subcellular location is the chromosome. It localises to the nucleus. Its function is as follows. Specifically recognizes and binds methylated 'Lys-9' of histone H3 (H3K9me), with highest preference for trimethylated 'Lys-9' (H3K9me3) followed by dimethylated 'Lys-9' (H3K9me2) followed by monomethylated 'Lys-9' (H3K9me1). Plays a role in maintaining correct unc-4 expression in the VC motor neurons where unc-4 is expressed in the vulval but not in the non-vulval VC neurons. The protein is Chromo domain-containing protein cec-3 (cec-3) of Caenorhabditis elegans.